Reading from the N-terminus, the 492-residue chain is N-succinylglutamate 5-semialdehyde dehydrogenase (492 aa).

220–225 serves as a coordination point for NAD(+); the sequence is GSASTG. Catalysis depends on residues E243 and C277.

The protein belongs to the aldehyde dehydrogenase family. AstD subfamily.

The enzyme catalyses N-succinyl-L-glutamate 5-semialdehyde + NAD(+) + H2O = N-succinyl-L-glutamate + NADH + 2 H(+). It functions in the pathway amino-acid degradation; L-arginine degradation via AST pathway; L-glutamate and succinate from L-arginine: step 4/5. Functionally, catalyzes the NAD-dependent reduction of succinylglutamate semialdehyde into succinylglutamate. The polypeptide is N-succinylglutamate 5-semialdehyde dehydrogenase (Salmonella agona (strain SL483)).